Here is a 314-residue protein sequence, read N- to C-terminus: Acetaldehyde dehydrogenase 1 (314 aa).

15–18 (SGNI) is a binding site for NAD(+). Cys-133 (acyl-thioester intermediate) is an active-site residue. Residues 164–172 (SAGPGTRAN) and Asn-291 each bind NAD(+).

This sequence belongs to the acetaldehyde dehydrogenase family.

It catalyses the reaction acetaldehyde + NAD(+) + CoA = acetyl-CoA + NADH + H(+). This chain is Acetaldehyde dehydrogenase 1, found in Paraburkholderia xenovorans (strain LB400).